The primary structure comprises 260 residues: Adenosylcobinamide-GDP ribazoletransferase (260 aa).

7 helical membrane-spanning segments follow: residues 31–51 (IIFFPFIGFLEGVFCIFLVNI), 55–75 (IFSSSVISIILLVFLFSVRGI), 111–131 (VIGVAGAVALVLDVLCRFAFV), 140–160 (FLIFLFMFCFSRWIVIPLMYY), 177–197 (ISSWQVIISTVLPIFLLVYFT), 202–222 (FIFLPLIALFLFFISYILKKF), and 234–254 (HLGATVEITEIVFLICFLLGE).

It belongs to the CobS family. Mg(2+) is required as a cofactor.

The protein resides in the cell inner membrane. The catalysed reaction is alpha-ribazole + adenosylcob(III)inamide-GDP = adenosylcob(III)alamin + GMP + H(+). The enzyme catalyses alpha-ribazole 5'-phosphate + adenosylcob(III)inamide-GDP = adenosylcob(III)alamin 5'-phosphate + GMP + H(+). Its pathway is cofactor biosynthesis; adenosylcobalamin biosynthesis; adenosylcobalamin from cob(II)yrinate a,c-diamide: step 7/7. In terms of biological role, joins adenosylcobinamide-GDP and alpha-ribazole to generate adenosylcobalamin (Ado-cobalamin). Also synthesizes adenosylcobalamin 5'-phosphate from adenosylcobinamide-GDP and alpha-ribazole 5'-phosphate. The sequence is that of Adenosylcobinamide-GDP ribazoletransferase from Thermodesulfovibrio yellowstonii (strain ATCC 51303 / DSM 11347 / YP87).